A 260-amino-acid polypeptide reads, in one-letter code: uncharacterized protein (260 aa).

Residues 6–239 enclose the Radical SAM core domain; it reads AGVRSGVVVS…VAVAETYLPN (234 aa).

This is an uncharacterized protein from Sinorhizobium fredii (strain NBRC 101917 / NGR234).